Consider the following 214-residue polypeptide: Ras-like protein rasZ (214 aa).

GTP is bound at residue 16–23; it reads GDGGVGKT. Residues 38–46 carry the Effector region motif; that stretch reads YDPTIEDSY. GTP contacts are provided by residues 63–67 and 122–125; these read DTAGQ and NKSD. A Cysteine methyl ester modification is found at cysteine 211. Cysteine 211 carries S-geranylgeranyl cysteine lipidation. A propeptide spans 212–214 (removed in mature form); it reads KMM.

The protein belongs to the small GTPase superfamily. Ras family.

The protein resides in the cell membrane. The enzyme catalyses GTP + H2O = GDP + phosphate + H(+). Functionally, ras proteins bind GDP/GTP and possess intrinsic GTPase activity. In Dictyostelium discoideum (Social amoeba), this protein is Ras-like protein rasZ (rasZ).